Here is a 244-residue protein sequence, read N- to C-terminus: Phosphoadenosine 5'-phosphosulfate reductase (244 aa).

Cys239 acts as the Nucleophile; cysteine thiosulfonate intermediate in catalysis.

It belongs to the PAPS reductase family. CysH subfamily.

It is found in the cytoplasm. It carries out the reaction [thioredoxin]-disulfide + sulfite + adenosine 3',5'-bisphosphate + 2 H(+) = [thioredoxin]-dithiol + 3'-phosphoadenylyl sulfate. The protein operates within sulfur metabolism; hydrogen sulfide biosynthesis; sulfite from sulfate: step 3/3. Its function is as follows. Catalyzes the formation of sulfite from phosphoadenosine 5'-phosphosulfate (PAPS) using thioredoxin as an electron donor. The sequence is that of Phosphoadenosine 5'-phosphosulfate reductase from Sodalis glossinidius (strain morsitans).